The following is a 544-amino-acid chain: pH-responsive protein 2 (544 aa).

The signal sequence occupies residues 1 to 22; that stretch reads MLLKSLFPSILAATSFVSSVAA. N-linked (GlcNAc...) asparagine glycosylation is found at Asn-40 and Asn-59. Cysteines 72 and 101 form a disulfide. Asn-147 is a glycosylation site (N-linked (GlcNAc...) asparagine). Intrachain disulfides connect Cys-214–Cys-347, Cys-232–Cys-263, Cys-369–Cys-420, Cys-378–Cys-444, and Cys-397–Cys-402. N-linked (GlcNAc...) asparagine glycosylation occurs at Asn-408. The disordered stretch occupies residues 469 to 514; sequence GSSGLGTVSGTVRTDTSQSTSDSGSGSSSSSSSSSSSSSSGSSGSK. Ser-515 carries GPI-anchor amidated serine lipidation. Positions 516–544 are cleaved as a propeptide — removed in mature form; it reads AASIVSVNLLTKIATIGISIVVGFGLITM.

Belongs to the glycosyl hydrolase 72 family.

The protein localises to the cell membrane. Functionally, required for apical cell growth and plays an essential role in morphogenesis. May be integral to the pathogenic ability of the organism. The protein is pH-responsive protein 2 (PHR2) of Candida albicans (strain SC5314 / ATCC MYA-2876) (Yeast).